The chain runs to 254 residues: uncharacterized protein (254 aa).

The next 8 membrane-spanning stretches (helical) occupy residues 41–61, 64–84, 91–111, 125–145, 146–166, 172–192, 204–224, and 232–252; these read LFVF…IKII, ILQA…EYFF, IYCG…LYIL, LLIS…FVLA, PAAL…LWSF, FILL…IQLL, MIRA…ILTP, and LIMS…LLVL.

It belongs to the TatC family.

Its subcellular location is the plastid. The protein localises to the chloroplast membrane. This is an uncharacterized protein from Pyropia yezoensis (Susabi-nori).